The primary structure comprises 73 residues: U3-agatoxin-Ao1k (73 aa).

The signal sequence occupies residues 1–20 (MRTIISLLLLSAMVFAVIEA). The propeptide occupies 21-34 (ISLEEGLQLFEGER). Cystine bridges form between Cys36/Cys52, Cys43/Cys57, Cys51/Cys67, and Cys59/Cys65. At Ser71 the chain carries Serine amide.

This sequence belongs to the neurotoxin 07 (Beta/delta-agtx) family. 03 (aga-4) subfamily. Aga sub-subfamily. In terms of tissue distribution, expressed by the venom gland.

It is found in the secreted. Its function is as follows. Insecticidal neurotoxin that modulates the insect Nav channel (DmNaV1/tipE (para/tipE)) in a unique manner, with both the activation and inactivation processes being affected. The voltage dependence of activation is shifted toward more hyperpolarized potentials (analogous to site 4 toxins) and a non-inactivating persistent sodium current is induced (site 3-like action). Interestingly, both effects take place in a voltage-dependent manner, producing a bell-shaped curve between -80 and 0 mV. Compared to beta/delta-agatoxin-1 to -3, this toxin appears to affect the insect sodium channel only weakly. The protein is U3-agatoxin-Ao1k of Agelena orientalis (Funnel-web spider).